We begin with the raw amino-acid sequence, 310 residues long: TLC domain-containing protein 2 (310 aa).

Helical transmembrane passes span 6 to 26 (LLVAGASFTAFRGLHWGLQLL), 40 to 60 (NIFVSLIHSLLSGVGALVGLW), 79 to 99 (VLVAVSVGYFAADGVDMLWNQ), 117 to 137 (CLSTAVVSGHYVGFSMVSLLL), 167 to 187 (ASLATLVLFRLLPLGWMSLWL), and 194 to 214 (LSLALVLLCVAGLVTVGSISI). The 195-residue stretch at 33–227 (RDRWMWRNIF…IRILTKDILQ (195 aa)) folds into the TLC domain.

This sequence belongs to the TLCD family.

It is found in the cell membrane. Regulates the composition and fluidity of the plasma membrane. Inhibits the incorporation of membrane-fluidizing phospholipids containing omega-3 long-chain polyunsaturated fatty acids (LCPUFA) and thereby promotes membrane rigidity. Does not appear to have any effect on LCPUFA synthesis. The chain is TLC domain-containing protein 2 (Tlcd2) from Mus musculus (Mouse).